The following is a 405-amino-acid chain: Tryptophan synthase beta chain (405 aa).

Lys-98 carries the post-translational modification N6-(pyridoxal phosphate)lysine.

It belongs to the TrpB family. As to quaternary structure, tetramer of two alpha and two beta chains. Pyridoxal 5'-phosphate serves as cofactor.

It carries out the reaction (1S,2R)-1-C-(indol-3-yl)glycerol 3-phosphate + L-serine = D-glyceraldehyde 3-phosphate + L-tryptophan + H2O. It participates in amino-acid biosynthesis; L-tryptophan biosynthesis; L-tryptophan from chorismate: step 5/5. In terms of biological role, the beta subunit is responsible for the synthesis of L-tryptophan from indole and L-serine. The sequence is that of Tryptophan synthase beta chain from Xanthomonas campestris pv. campestris (strain 8004).